The primary structure comprises 430 residues: Methylenetetrahydrofolate--tRNA-(uracil-5-)-methyltransferase TrmFO (430 aa).

9 to 14 (GAGLAG) lines the FAD pocket.

The protein belongs to the MnmG family. TrmFO subfamily. FAD serves as cofactor.

It localises to the cytoplasm. It catalyses the reaction uridine(54) in tRNA + (6R)-5,10-methylene-5,6,7,8-tetrahydrofolate + NADH + H(+) = 5-methyluridine(54) in tRNA + (6S)-5,6,7,8-tetrahydrofolate + NAD(+). The enzyme catalyses uridine(54) in tRNA + (6R)-5,10-methylene-5,6,7,8-tetrahydrofolate + NADPH + H(+) = 5-methyluridine(54) in tRNA + (6S)-5,6,7,8-tetrahydrofolate + NADP(+). Functionally, catalyzes the folate-dependent formation of 5-methyl-uridine at position 54 (M-5-U54) in all tRNAs. This Fervidobacterium nodosum (strain ATCC 35602 / DSM 5306 / Rt17-B1) protein is Methylenetetrahydrofolate--tRNA-(uracil-5-)-methyltransferase TrmFO.